The following is a 259-amino-acid chain: Acyl-[acyl-carrier-protein]--UDP-N-acetylglucosamine O-acyltransferase (259 aa).

This sequence belongs to the transferase hexapeptide repeat family. LpxA subfamily. Homotrimer.

The protein localises to the cytoplasm. It carries out the reaction a (3R)-hydroxyacyl-[ACP] + UDP-N-acetyl-alpha-D-glucosamine = a UDP-3-O-[(3R)-3-hydroxyacyl]-N-acetyl-alpha-D-glucosamine + holo-[ACP]. Its pathway is glycolipid biosynthesis; lipid IV(A) biosynthesis; lipid IV(A) from (3R)-3-hydroxytetradecanoyl-[acyl-carrier-protein] and UDP-N-acetyl-alpha-D-glucosamine: step 1/6. Functionally, involved in the biosynthesis of lipid A, a phosphorylated glycolipid that anchors the lipopolysaccharide to the outer membrane of the cell. In Nautilia profundicola (strain ATCC BAA-1463 / DSM 18972 / AmH), this protein is Acyl-[acyl-carrier-protein]--UDP-N-acetylglucosamine O-acyltransferase.